The chain runs to 835 residues: Cap-specific mRNA (nucleoside-2'-O-)-methyltransferase 1 (835 aa).

The short motif at 2-19 (RRRNDPECTAPIKKQKKR) is the Bipartite nuclear localization signal element. Residues 24–68 (ALNLSAASGDEPPSSVNHAAKASTTSLSGSDSETEGKQHGSDSFD) are disordered. 5 positions are modified to phosphoserine: Ser28, Ser31, Ser53, Ser66, and Ser91. Over residues 37-54 (SSVNHAAKASTTSLSGSD) the composition is skewed to polar residues. Basic and acidic residues predominate over residues 57–68 (TEGKQHGSDSFD). In terms of domain architecture, G-patch spans 87 to 133 (YNSVSQKLMAKMGFREGEGLGKYSQGRKDIVEASNQKGRRGLGLTLQ). Position 108 is an N6-acetyllysine (Lys108). Substrate contacts are provided by residues 203–207 (KSVFD) and Arg218. The RrmJ-type SAM-dependent 2'-O-MTase domain occupies 231 to 450 (FFLNRAAMKM…ERYVVCKGLK (220 aa)). Asn234 serves as a coordination point for S-adenosyl-L-methionine. Lys239 is an active-site residue. Residues 277 to 283 (CAGPGGF) and 335 to 336 (DI) each bind S-adenosyl-L-methionine. Asp364 is an active-site residue. Residue 374 to 376 (NLQ) coordinates substrate. The active-site Proton acceptor is the Lys404. A substrate-binding site is contributed by Asn439. The interaction with POLR2A stretch occupies residues 727–835 (SSGTPKLSYT…VLSFIQTHSA (109 aa)). A WW domain is found at 752–786 (RTVNEPWTMGFSKSFKRKFFYNKKTKISTFDLPAD).

As to quaternary structure, interacts with POLR2A (via C-terminus).

The protein localises to the nucleus. The enzyme catalyses a 5'-end (N(7)-methyl 5'-triphosphoguanosine)-ribonucleoside in mRNA + S-adenosyl-L-methionine = a 5'-end (N(7)-methyl 5'-triphosphoguanosine)-(2'-O-methyl-ribonucleoside) in mRNA + S-adenosyl-L-homocysteine + H(+). Functionally, S-adenosyl-L-methionine-dependent methyltransferase that mediates mRNA cap1 2'-O-ribose methylation to the 5'-cap structure of mRNAs. Methylates the ribose of the first nucleotide of a m(7)GpppG-capped mRNA and small nuclear RNA (snRNA) to produce m(7)GpppRm (cap1). Displays a preference for cap0 transcripts. Cap1 modification is linked to higher levels of translation. May be involved in the interferon response pathway. The protein is Cap-specific mRNA (nucleoside-2'-O-)-methyltransferase 1 (CMTR1) of Ailuropoda melanoleuca (Giant panda).